The sequence spans 671 residues: Zinc finger and BTB domain-containing protein 16-A (671 aa).

A BTB domain is found at 34-96 (CDVVIMVDSQ…AYTATLQAKV (63 aa)). 2 disordered regions span residues 130–167 (ENDT…TEES) and 248–289 (VDES…RSSV). The segment covering 270–279 (RSGEPDKNRD) has biased composition (basic and acidic residues). At Thr283 the chain carries Phosphothreonine. 9 C2H2-type zinc fingers span residues 401–423 (ERCN…RKLH), 429–451 (YGCE…LLSH), 458–480 (IVCD…RQIH), 487–509 (IFCL…MEVH), 515–537 (YICS…LRSH), 544–566 (FECE…KRIH), 572–594 (YECN…YRVH), 600–622 (FECK…LRTH), and 628–650 (YQCT…MKGH).

Belongs to the krueppel C2H2-type zinc-finger protein family. As to quaternary structure, interacts with btbd6a (via BTB domain). Polyubiquitinated, leading to its proteasomal degradation. During early stages of primary neurogenesis, expressed in the neural epithelium, with highest levels in the forebrain and midbrain. Also expressed in a posterior-to-anterior gradient in the caudal neural plate at the 3-6 somite stage.

The protein localises to the nucleus. The protein resides in the cytoplasm. It functions in the pathway protein modification; protein ubiquitination. Functionally, probable transcription factor. Probable substrate-recognition component of an E3 ubiquitin-protein ligase complex which mediates the ubiquitination and subsequent proteasomal degradation of target proteins. Inhibits neurogenesis. The protein is Zinc finger and BTB domain-containing protein 16-A of Danio rerio (Zebrafish).